Reading from the N-terminus, the 398-residue chain is Succinate--CoA ligase [ADP-forming] subunit beta (398 aa).

The ATP-grasp domain occupies 9 to 254; sequence KRLLHTYGAP…LSEEDEKEIE (246 aa). ATP is bound by residues K46, 53-55, E109, A112, and E117; that span reads GRG. The Mg(2+) site is built by N209 and D223. Substrate contacts are provided by residues N274 and 331 to 333; that span reads GIM.

This sequence belongs to the succinate/malate CoA ligase beta subunit family. As to quaternary structure, heterotetramer of two alpha and two beta subunits. Requires Mg(2+) as cofactor.

It carries out the reaction succinate + ATP + CoA = succinyl-CoA + ADP + phosphate. The enzyme catalyses GTP + succinate + CoA = succinyl-CoA + GDP + phosphate. It participates in carbohydrate metabolism; tricarboxylic acid cycle; succinate from succinyl-CoA (ligase route): step 1/1. Functionally, succinyl-CoA synthetase functions in the citric acid cycle (TCA), coupling the hydrolysis of succinyl-CoA to the synthesis of either ATP or GTP and thus represents the only step of substrate-level phosphorylation in the TCA. The beta subunit provides nucleotide specificity of the enzyme and binds the substrate succinate, while the binding sites for coenzyme A and phosphate are found in the alpha subunit. This Brucella anthropi (strain ATCC 49188 / DSM 6882 / CCUG 24695 / JCM 21032 / LMG 3331 / NBRC 15819 / NCTC 12168 / Alc 37) (Ochrobactrum anthropi) protein is Succinate--CoA ligase [ADP-forming] subunit beta.